Reading from the N-terminus, the 207-residue chain is Small ribosomal subunit protein uS4 (207 aa).

One can recognise an S4 RNA-binding domain in the interval 96–159 (RRLDNVVYRL…RASTFIADNI (64 aa)).

It belongs to the universal ribosomal protein uS4 family. Part of the 30S ribosomal subunit. Contacts protein S5. The interaction surface between S4 and S5 is involved in control of translational fidelity.

Functionally, one of the primary rRNA binding proteins, it binds directly to 16S rRNA where it nucleates assembly of the body of the 30S subunit. With S5 and S12 plays an important role in translational accuracy. The chain is Small ribosomal subunit protein uS4 from Leptospira borgpetersenii serovar Hardjo-bovis (strain JB197).